The chain runs to 102 residues: uncharacterized protein (102 aa).

A helical membrane pass occupies residues 29–52 (IGSTYFCFGGAIFILVAPLTNLVY).

The protein localises to the membrane. This is an uncharacterized protein from Saccharomyces cerevisiae (strain ATCC 204508 / S288c) (Baker's yeast).